We begin with the raw amino-acid sequence, 118 residues long: uncharacterized protein (118 aa).

The protein to S.pombe tam6.

The protein localises to the mitochondrion. This is an uncharacterized protein from Saccharomyces cerevisiae (strain ATCC 204508 / S288c) (Baker's yeast).